Reading from the N-terminus, the 109-residue chain is UPF0060 membrane protein PA14_21660 (109 aa).

4 helical membrane passes run 5 to 25 (LWFV…YLWL), 27 to 47 (LGKS…FALL), 59 to 79 (AYAA…AFVE), and 84 to 104 (LWSD…VLFG).

The protein belongs to the UPF0060 family.

The protein localises to the cell inner membrane. The sequence is that of UPF0060 membrane protein PA14_21660 from Pseudomonas aeruginosa (strain UCBPP-PA14).